The chain runs to 425 residues: UPF0229 protein ETA_15540 (425 aa).

Residues 60–111 form a disordered region; the sequence is NEPSFHQGRGGERYRVHPGNDHFVQNDRVDRPQGGGAGGSGQGNAGKDGEGQ. Residues 68 to 90 are compositionally biased toward basic and acidic residues; the sequence is RGGERYRVHPGNDHFVQNDRVDR. Residues 92–105 show a composition bias toward gly residues; sequence QGGGAGGSGQGNAG.

Belongs to the UPF0229 family.

This Erwinia tasmaniensis (strain DSM 17950 / CFBP 7177 / CIP 109463 / NCPPB 4357 / Et1/99) protein is UPF0229 protein ETA_15540.